Consider the following 498-residue polypeptide: Type II secretion system protein E (498 aa).

Zn(2+) contacts are provided by Cys-394, Cys-397, Cys-425, and Cys-428.

This sequence belongs to the GSP E family. In terms of assembly, forms homooligomers; most probably hexamers. Interacts with OutL/GspL. It depends on Zn(2+) as a cofactor.

It is found in the cell inner membrane. The catalysed reaction is ATP + H2O + cellular proteinSide 1 = ADP + phosphate + cellular proteinSide 2.. Functionally, ATPase component of the type II secretion system required for the energy-dependent secretion of extracellular factors such as proteases and toxins from the periplasm. Acts as a molecular motor to provide the energy that is required for assembly of the pseudopilus and the extrusion of substrates generated in the cytoplasm. In Dickeya dadantii (strain 3937) (Erwinia chrysanthemi (strain 3937)), this protein is Type II secretion system protein E (outE).